Here is a 129-residue protein sequence, read N- to C-terminus: uncharacterized protein (129 aa).

It belongs to the HesB/IscA family.

This is an uncharacterized protein from Buchnera aphidicola subsp. Schizaphis graminum (strain Sg).